The chain runs to 116 residues: Large ribosomal subunit protein uL18 (116 aa).

The protein belongs to the universal ribosomal protein uL18 family. Part of the 50S ribosomal subunit; part of the 5S rRNA/L5/L18/L25 subcomplex. Contacts the 5S and 23S rRNAs.

Functionally, this is one of the proteins that bind and probably mediate the attachment of the 5S RNA into the large ribosomal subunit, where it forms part of the central protuberance. In Pseudomonas putida (strain W619), this protein is Large ribosomal subunit protein uL18.